The primary structure comprises 390 residues: Chaperone protein DnaJ (390 aa).

In terms of domain architecture, J spans 6 to 70 (DYYEILGVPR…QKRAQYDQFG (65 aa)). The segment at 146-228 (GSEKEIYVTR…CHGTGKVRRK (83 aa)) adopts a CR-type zinc-finger fold. Positions 159, 162, 176, 179, 202, 205, 216, and 219 each coordinate Zn(2+). 4 CXXCXGXG motif repeats span residues 159-166 (CPTCKGKG), 176-183 (CDMCNGTG), 202-209 (CPKCHGTG), and 216-223 (CHECHGTG).

The protein belongs to the DnaJ family. In terms of assembly, homodimer. Requires Zn(2+) as cofactor.

The protein localises to the cytoplasm. Its function is as follows. Participates actively in the response to hyperosmotic and heat shock by preventing the aggregation of stress-denatured proteins and by disaggregating proteins, also in an autonomous, DnaK-independent fashion. Unfolded proteins bind initially to DnaJ; upon interaction with the DnaJ-bound protein, DnaK hydrolyzes its bound ATP, resulting in the formation of a stable complex. GrpE releases ADP from DnaK; ATP binding to DnaK triggers the release of the substrate protein, thus completing the reaction cycle. Several rounds of ATP-dependent interactions between DnaJ, DnaK and GrpE are required for fully efficient folding. Also involved, together with DnaK and GrpE, in the DNA replication of plasmids through activation of initiation proteins. The sequence is that of Chaperone protein DnaJ from Dictyoglomus thermophilum (strain ATCC 35947 / DSM 3960 / H-6-12).